The following is a 394-amino-acid chain: Phosphopentomutase (394 aa).

Positions 14, 287, 292, 328, 329, and 340 each coordinate Mn(2+).

This sequence belongs to the phosphopentomutase family. It depends on Mn(2+) as a cofactor.

The protein localises to the cytoplasm. It carries out the reaction 2-deoxy-alpha-D-ribose 1-phosphate = 2-deoxy-D-ribose 5-phosphate. The catalysed reaction is alpha-D-ribose 1-phosphate = D-ribose 5-phosphate. Its pathway is carbohydrate degradation; 2-deoxy-D-ribose 1-phosphate degradation; D-glyceraldehyde 3-phosphate and acetaldehyde from 2-deoxy-alpha-D-ribose 1-phosphate: step 1/2. Isomerase that catalyzes the conversion of deoxy-ribose 1-phosphate (dRib-1-P) and ribose 1-phosphate (Rib-1-P) to deoxy-ribose 5-phosphate (dRib-5-P) and ribose 5-phosphate (Rib-5-P), respectively. This Listeria monocytogenes serotype 4a (strain HCC23) protein is Phosphopentomutase.